Here is a 226-residue protein sequence, read N- to C-terminus: Thiamine-phosphate synthase (226 aa).

4-amino-2-methyl-5-(diphosphooxymethyl)pyrimidine contacts are provided by residues Gln-46 to Lys-50 and Asn-87. Residues Asp-88 and Asp-107 each coordinate Mg(2+). Residue Ser-126 participates in 4-amino-2-methyl-5-(diphosphooxymethyl)pyrimidine binding. Thr-152–Thr-154 contributes to the 2-[(2R,5Z)-2-carboxy-4-methylthiazol-5(2H)-ylidene]ethyl phosphate binding site. A 4-amino-2-methyl-5-(diphosphooxymethyl)pyrimidine-binding site is contributed by Lys-155. Residue Gly-183 coordinates 2-[(2R,5Z)-2-carboxy-4-methylthiazol-5(2H)-ylidene]ethyl phosphate.

The protein belongs to the thiamine-phosphate synthase family. It depends on Mg(2+) as a cofactor.

The catalysed reaction is 2-[(2R,5Z)-2-carboxy-4-methylthiazol-5(2H)-ylidene]ethyl phosphate + 4-amino-2-methyl-5-(diphosphooxymethyl)pyrimidine + 2 H(+) = thiamine phosphate + CO2 + diphosphate. It catalyses the reaction 2-(2-carboxy-4-methylthiazol-5-yl)ethyl phosphate + 4-amino-2-methyl-5-(diphosphooxymethyl)pyrimidine + 2 H(+) = thiamine phosphate + CO2 + diphosphate. The enzyme catalyses 4-methyl-5-(2-phosphooxyethyl)-thiazole + 4-amino-2-methyl-5-(diphosphooxymethyl)pyrimidine + H(+) = thiamine phosphate + diphosphate. Its pathway is cofactor biosynthesis; thiamine diphosphate biosynthesis; thiamine phosphate from 4-amino-2-methyl-5-diphosphomethylpyrimidine and 4-methyl-5-(2-phosphoethyl)-thiazole: step 1/1. Functionally, condenses 4-methyl-5-(beta-hydroxyethyl)thiazole monophosphate (THZ-P) and 2-methyl-4-amino-5-hydroxymethyl pyrimidine pyrophosphate (HMP-PP) to form thiamine monophosphate (TMP). This is Thiamine-phosphate synthase from Mycobacterium sp. (strain KMS).